Here is a 193-residue protein sequence, read N- to C-terminus: Ion-translocating oxidoreductase complex subunit B (193 aa).

Positions 1–23 (MTFLFIVITLLALIFGAILGFAS) are hydrophobic. In terms of domain architecture, 4Fe-4S spans 29 to 87 (EADPVVEKIDAILPQSQCGQCGYPGCKPYAEAICNGDEITKCIPGGQTTIVKIAEILGV). [4Fe-4S] cluster contacts are provided by Cys-46, Cys-49, Cys-54, Cys-70, Cys-110, Cys-113, Cys-116, Cys-120, Cys-140, Cys-143, Cys-146, and Cys-150. 2 consecutive 4Fe-4S ferredoxin-type domains span residues 101–130 (KVAF…GTNK) and 131–160 (AMHT…MIPV).

Belongs to the 4Fe4S bacterial-type ferredoxin family. RnfB subfamily. As to quaternary structure, the complex is composed of six subunits: RnfA, RnfB, RnfC, RnfD, RnfE and RnfG. Requires [4Fe-4S] cluster as cofactor.

The protein localises to the cell inner membrane. In terms of biological role, part of a membrane-bound complex that couples electron transfer with translocation of ions across the membrane. The sequence is that of Ion-translocating oxidoreductase complex subunit B from Haemophilus influenzae (strain 86-028NP).